The chain runs to 303 residues: Putative HTH-type transcriptional regulatory protein Mpal_0031 (303 aa).

The HTH cro/C1-type domain maps to 132 to 189 (LRGLREQRNMSLGDLGAVLGVSRRTISKYESGMGTTLEIAIKIEEVFDSGVIESIDLL). The H-T-H motif DNA-binding region spans 143–162 (LGDLGAVLGVSRRTISKYES).

This chain is Putative HTH-type transcriptional regulatory protein Mpal_0031, found in Methanosphaerula palustris (strain ATCC BAA-1556 / DSM 19958 / E1-9c).